The following is a 164-amino-acid chain: Cyclic pyranopterin monophosphate synthase (164 aa).

Residues 77–79 (LCH) and 115–116 (ME) each bind substrate. Residue Asp-130 is part of the active site.

The protein belongs to the MoaC family. Homohexamer; trimer of dimers.

The enzyme catalyses (8S)-3',8-cyclo-7,8-dihydroguanosine 5'-triphosphate = cyclic pyranopterin phosphate + diphosphate. It functions in the pathway cofactor biosynthesis; molybdopterin biosynthesis. Functionally, catalyzes the conversion of (8S)-3',8-cyclo-7,8-dihydroguanosine 5'-triphosphate to cyclic pyranopterin monophosphate (cPMP). This Rhizobium meliloti (strain 1021) (Ensifer meliloti) protein is Cyclic pyranopterin monophosphate synthase.